Here is a 535-residue protein sequence, read N- to C-terminus: Bifunctional purine biosynthesis protein PurH (535 aa).

Residues 1 to 148 (MNNARPIRRA…KNHKDTTIIV (148 aa)) enclose the MGS-like domain.

The protein belongs to the PurH family.

The enzyme catalyses (6R)-10-formyltetrahydrofolate + 5-amino-1-(5-phospho-beta-D-ribosyl)imidazole-4-carboxamide = 5-formamido-1-(5-phospho-D-ribosyl)imidazole-4-carboxamide + (6S)-5,6,7,8-tetrahydrofolate. The catalysed reaction is IMP + H2O = 5-formamido-1-(5-phospho-D-ribosyl)imidazole-4-carboxamide. Its pathway is purine metabolism; IMP biosynthesis via de novo pathway; 5-formamido-1-(5-phospho-D-ribosyl)imidazole-4-carboxamide from 5-amino-1-(5-phospho-D-ribosyl)imidazole-4-carboxamide (10-formyl THF route): step 1/1. It participates in purine metabolism; IMP biosynthesis via de novo pathway; IMP from 5-formamido-1-(5-phospho-D-ribosyl)imidazole-4-carboxamide: step 1/1. The sequence is that of Bifunctional purine biosynthesis protein PurH from Shewanella woodyi (strain ATCC 51908 / MS32).